A 128-amino-acid polypeptide reads, in one-letter code: Disintegrin gabonin-1 (128 aa).

A signal peptide spans 1–20; that stretch reads MIQVLLVIICLAVFPYQGSS. Positions 21–47 are excised as a propeptide; sequence IILESGNVNDYEIVYPKKVTVLPTGAM. The region spanning 47–112 is the Disintegrin domain; that stretch reads MNSAHPCCDP…DCPRNPNKGE (66 aa). 4 disulfide bridges follow: Cys-53-Cys-76, Cys-67-Cys-73, Cys-72-Cys-97, and Cys-85-Cys-104. A Cell attachment site motif is present at residues 89-91; the sequence is RGD. Residues 108-128 form a disordered region; the sequence is PNKGESDELEWSAAATGSVLM.

Belongs to the disintegrin family. Dimeric disintegrin subfamily. As to quaternary structure, heterodimer with bitisgabonin (bitisgabonin-1 is the name of the heterodimer); disulfide-linked. In terms of tissue distribution, expressed by the venom gland.

The protein resides in the secreted. Its function is as follows. The heterodimer bitisgabonin-1 is a potent inhibitor of the adhesion of the RGD-dependent integrin alpha-5/beta-1 (ITGA5/ITGB1) to immobilized fibronectin. The chain is Disintegrin gabonin-1 from Bitis gabonica (Gaboon adder).